The following is a 314-amino-acid chain: Olfactory receptor-like protein I9 (314 aa).

Residues 1–25 (MTRRNQTAISQFFLLGLPFPPEYQH) are Extracellular-facing. N-linked (GlcNAc...) asparagine glycosylation is present at N5. A helical transmembrane segment spans residues 26 to 50 (LFYALFLAMYLTTLLGNLIIIILIL). At 51–57 (LDSHLHT) the chain is on the cytoplasmic side. A helical transmembrane segment spans residues 58-79 (PMYLFLSNLSFADLCFSSVTMP). Over 80–100 (KLLQNMQSQVPSIPYAGCLAQ) the chain is Extracellular. C97 and C189 are disulfide-bonded. The helical transmembrane segment at 101–120 (IYFFLFFGDLGNFLLVAMAY) threads the bilayer. Topologically, residues 121–139 (DRYVAICFPLHYMSIMSPK) are cytoplasmic. The helical transmembrane segment at 140–158 (LCVSLVVLSWVLTTFHAML) threads the bilayer. Residues 159–196 (HTLLMARLSFCEDSVIPHYFCDMSTLLKVACSDTHDNE) lie on the Extracellular side of the membrane. The chain crosses the membrane as a helical span at residues 197–219 (LAIFILGGPIVVLPFLLIIVSYA). The Cytoplasmic segment spans residues 220-236 (RIVSSIFKVPSSQSIHK). A helical membrane pass occupies residues 237-260 (AFSTCGSHLSVVSLFYGTVIGLYL). The Extracellular segment spans residues 261–272 (CPSANNSTVKET). Residues 273–292 (VMSLMYTMVTPMLNPFIYSL) form a helical membrane-spanning segment. Topologically, residues 293 to 314 (RNRDIKDALEKIMCKKQIPSFL) are cytoplasmic.

Belongs to the G-protein coupled receptor 1 family. Olfactory epithelium.

Its subcellular location is the cell membrane. Functionally, odorant receptor. The chain is Olfactory receptor-like protein I9 from Rattus norvegicus (Rat).